Here is a 398-residue protein sequence, read N- to C-terminus: ATP-dependent RNA helicase RhlB (398 aa).

Positions 9–37 match the Q motif motif; the sequence is TRFHDFKLSNELMHAIHDLGFPYCTPIQA. Positions 40-220 constitute a Helicase ATP-binding domain; sequence LGYTLRGQDA…KQWTTNPAIV (181 aa). 53 to 60 is a binding site for ATP; sequence AQTGTGKT. Positions 166–169 match the DEAD box motif; it reads DEAD. The region spanning 243-393 is the Helicase C-terminal domain; sequence DKYKLLYNLV…MPPDELLKPV (151 aa).

This sequence belongs to the DEAD box helicase family. RhlB subfamily. In terms of assembly, component of the RNA degradosome, which is a multiprotein complex involved in RNA processing and mRNA degradation.

The protein resides in the cytoplasm. It carries out the reaction ATP + H2O = ADP + phosphate + H(+). Its function is as follows. DEAD-box RNA helicase involved in RNA degradation. Has RNA-dependent ATPase activity and unwinds double-stranded RNA. The polypeptide is ATP-dependent RNA helicase RhlB (Pseudomonas putida (strain ATCC 47054 / DSM 6125 / CFBP 8728 / NCIMB 11950 / KT2440)).